A 331-amino-acid chain; its full sequence is GATA transcription factor 12 (331 aa).

Disordered regions lie at residues 30–49 (ENDV…SSNF) and 105–138 (SGFK…SVPA). The span at 34 to 47 (VADSTTTTTITDSS) shows a compositional bias: low complexity. Residues 116–134 (DTGSPENPNSSSPIFTTDV) show a composition bias toward polar residues. The short motif at 139 to 146 (KARSKRSR) is the Nuclear localization signal element. Residues 174–218 (SSQQHLSPPTSPPLLMAPLGKKQAVDGGHRRKKDVSSPESGGAEE) are disordered. The segment at 215–269 (GAEERRCLHCATDKTPQWRTGPMGPKTLCNACGVRYKSGRLVPEYRPAASPTFVL) adopts a GATA-type zinc-finger fold.

It belongs to the type IV zinc-finger family. Class A subfamily. In terms of tissue distribution, expressed in the vascular cylinder of roots. Expressed in the differentiation zone of the root stele.

The protein localises to the nucleus. Functionally, transcriptional activator that specifically binds 5'-GATA-3' or 5'-GAT-3' motifs within gene promoters. May be involved in the regulation of some light-responsive genes. Transcription activator involved in xylem formation. Functions upstream of NAC030/VND7, a master switch of xylem vessel differentiation. The chain is GATA transcription factor 12 from Arabidopsis thaliana (Mouse-ear cress).